Consider the following 368-residue polypeptide: MSFRTEPPYIHGSTPKTAVVLVNLGTPDAPTTSAVRRYLKQFLSDPRVVEIPRAIWWFILHLVILPFRSGQSAKKYASIWSNEGSPLKVHTEKQAKLLNGYLGERGHKVKVVYAMRYGQPALPDVLRQLKADGCERILFLPAYPQYSGTTTASIFDAVFSHYTQERNVPELRFIKHYHDHDAYIRALRKSVQAHWDMAGRPDKLVMSFHGVPKRTLTLGDPYHCECHKTARLLAKELELTQEQYMVTFQSRFGKAEWLQPYTAPTLQKLAKEGIGRVDVICPGFTSDCLETLEEIAMEARHDFMSAGGKDFNYIGCLNEDDAWIKAMAEITELHLIGWPTIVPPSLREEQEQQAHISREEARRLGADQ.

Fe cation-binding residues include histidine 209 and glutamate 290. The tract at residues 347–368 (REEQEQQAHISREEARRLGADQ) is disordered.

Belongs to the ferrochelatase family.

The protein resides in the cytoplasm. It catalyses the reaction heme b + 2 H(+) = protoporphyrin IX + Fe(2+). It participates in porphyrin-containing compound metabolism; protoheme biosynthesis; protoheme from protoporphyrin-IX: step 1/1. In terms of biological role, catalyzes the ferrous insertion into protoporphyrin IX. This is Ferrochelatase from Janthinobacterium sp. (strain Marseille) (Minibacterium massiliensis).